A 185-amino-acid polypeptide reads, in one-letter code: Ribosome-recycling factor (185 aa).

This sequence belongs to the RRF family.

The protein localises to the cytoplasm. In terms of biological role, responsible for the release of ribosomes from messenger RNA at the termination of protein biosynthesis. May increase the efficiency of translation by recycling ribosomes from one round of translation to another. The sequence is that of Ribosome-recycling factor from Campylobacter fetus subsp. fetus (strain 82-40).